Reading from the N-terminus, the 63-residue chain is Beta-defensin 3 (63 aa).

The signal sequence occupies residues 1-20; the sequence is MRIHYLLFSFLLVLLSPLSA. Positions 21-22 are excised as a propeptide; it reads FS. Intrachain disulfides connect cysteine 31–cysteine 59, cysteine 38–cysteine 52, and cysteine 42–cysteine 60.

Belongs to the beta-defensin family.

It localises to the secreted. Its function is as follows. Has bactericidal activity. The chain is Beta-defensin 3 (Defb3) from Rattus norvegicus (Rat).